The primary structure comprises 365 residues: MAEKEVPLTAVKVEALVVMKIIKHCSQTFPTTATGSIVGMDAEGTLEITNSFPFPVVEMPAESHFDNTAPNPAAAAPRAKANTVYQAEMIRMLREVNVDANNVGWYTSANMGNFVNMNVIENQYFYQKEMNERTVALVHDVSRSAQGSLSLRAFRLSPKFMAAFKENKFTAEELQKSGLRYQDIFVELPVEIHNSHLITTFLHQLQCPRQSAPTDLPPSLAALESGPFVKDTILAPNYDNLSLSIDPFLEKNCDLLLDSIETHNTETNNFQYYQRSFTREQTKINQWIAKRKAENASRATLKQPPLPEDEWQRLFKLPQEPSRLESMLNSRQVEQYARQVDSFVSATTGKMFAVKGNLLPGETAK.

The region spanning 11-160 (VKVEALVVMK…LRAFRLSPKF (150 aa)) is the MPN domain.

This sequence belongs to the eIF-3 subunit H family. In terms of assembly, component of the eukaryotic translation initiation factor 3 (eIF-3) complex.

It is found in the cytoplasm. Component of the eukaryotic translation initiation factor 3 (eIF-3) complex, which is involved in protein synthesis of a specialized repertoire of mRNAs and, together with other initiation factors, stimulates binding of mRNA and methionyl-tRNAi to the 40S ribosome. The eIF-3 complex specifically targets and initiates translation of a subset of mRNAs involved in cell proliferation. The polypeptide is Eukaryotic translation initiation factor 3 subunit H (Aspergillus terreus (strain NIH 2624 / FGSC A1156)).